Reading from the N-terminus, the 556-residue chain is Formate--tetrahydrofolate ligase 1 (556 aa).

Residue 65-72 participates in ATP binding; the sequence is TPAGEGKS.

Belongs to the formate--tetrahydrofolate ligase family.

The catalysed reaction is (6S)-5,6,7,8-tetrahydrofolate + formate + ATP = (6R)-10-formyltetrahydrofolate + ADP + phosphate. It participates in one-carbon metabolism; tetrahydrofolate interconversion. The polypeptide is Formate--tetrahydrofolate ligase 1 (Streptococcus pyogenes serotype M2 (strain MGAS10270)).